The sequence spans 291 residues: Elongation factor Ts (291 aa).

Residues 80-83 (TDFV) are involved in Mg(2+) ion dislocation from EF-Tu.

Belongs to the EF-Ts family.

The protein localises to the cytoplasm. Its function is as follows. Associates with the EF-Tu.GDP complex and induces the exchange of GDP to GTP. It remains bound to the aminoacyl-tRNA.EF-Tu.GTP complex up to the GTP hydrolysis stage on the ribosome. In Ligilactobacillus salivarius (strain UCC118) (Lactobacillus salivarius), this protein is Elongation factor Ts.